Reading from the N-terminus, the 230-residue chain is Large ribosomal subunit protein uL1 (230 aa).

This sequence belongs to the universal ribosomal protein uL1 family. Part of the 50S ribosomal subunit.

In terms of biological role, binds directly to 23S rRNA. The L1 stalk is quite mobile in the ribosome, and is involved in E site tRNA release. Protein L1 is also a translational repressor protein, it controls the translation of the L11 operon by binding to its mRNA. This is Large ribosomal subunit protein uL1 from Leptospira interrogans serogroup Icterohaemorrhagiae serovar copenhageni (strain Fiocruz L1-130).